A 216-amino-acid chain; its full sequence is HTH-type transcriptional regulator EthR (216 aa).

A compositionally biased stretch (polar residues) spans 1 to 10 (MTTSAASQAS). Residues 1–24 (MTTSAASQASLPRGRRTARPSGDD) form a disordered region. The 61-residue stretch at 23 to 83 (DDRELAILAT…TLLDRVVNQA (61 aa)) folds into the HTH tetR-type domain. Positions 46 to 65 (SVDDLAKGAGISRPTFYFYF) form a DNA-binding region, H-T-H motif.

As to quaternary structure, homodimer.

Its function is as follows. Involved in the repression of the monooxygenase EthA which is responsible of the formation of the active metabolite of ethionamide (ETH). The polypeptide is HTH-type transcriptional regulator EthR (ethR) (Mycobacterium bovis (strain ATCC BAA-935 / AF2122/97)).